Here is an 802-residue protein sequence, read N- to C-terminus: Phenylalanine--tRNA ligase beta subunit (802 aa).

The region spanning Ser-40 to Ile-155 is the tRNA-binding domain. Positions Lys-409 to Val-484 constitute a B5 domain. Mg(2+)-binding residues include Asp-462, Asp-468, Glu-471, and Glu-472. Positions Pro-709–Arg-802 constitute an FDX-ACB domain.

This sequence belongs to the phenylalanyl-tRNA synthetase beta subunit family. Type 1 subfamily. As to quaternary structure, tetramer of two alpha and two beta subunits. The cofactor is Mg(2+).

It is found in the cytoplasm. It carries out the reaction tRNA(Phe) + L-phenylalanine + ATP = L-phenylalanyl-tRNA(Phe) + AMP + diphosphate + H(+). This chain is Phenylalanine--tRNA ligase beta subunit, found in Listeria monocytogenes serotype 4b (strain F2365).